Reading from the N-terminus, the 187-residue chain is Peptide deformylase (187 aa).

Residues C114 and H157 each coordinate Fe cation. E158 is an active-site residue. Position 161 (H161) interacts with Fe cation.

It belongs to the polypeptide deformylase family. It depends on Fe(2+) as a cofactor.

It catalyses the reaction N-terminal N-formyl-L-methionyl-[peptide] + H2O = N-terminal L-methionyl-[peptide] + formate. In terms of biological role, removes the formyl group from the N-terminal Met of newly synthesized proteins. Requires at least a dipeptide for an efficient rate of reaction. N-terminal L-methionine is a prerequisite for activity but the enzyme has broad specificity at other positions. The protein is Peptide deformylase of Enterococcus faecalis (strain ATCC 700802 / V583).